The sequence spans 150 residues: uncharacterized protein (150 aa).

This is an uncharacterized protein from Acidianus filamentous virus 1 (isolate United States/Yellowstone) (AFV-1).